We begin with the raw amino-acid sequence, 1091 residues long: ATPase family AAA domain-containing protein 2 (1091 aa).

The tract at residues 32–211 (LEDLGVFNET…HFERRRKRSR (180 aa)) is disordered. Positions 53–62 (KQKDIQRTDE) are enriched in basic and acidic residues. A compositionally biased stretch (acidic residues) spans 74-119 (SSEEGEDQEHEDDGEDEDDEDEDDDDDDDDDDDDDEDDEDEEDGEE). A Glycyl lysine isopeptide (Lys-Gly) (interchain with G-Cter in SUMO2) cross-link involves residue Lys148. 4 positions are modified to phosphoserine: Ser158, Ser168, Ser173, and Ser241. 298 to 305 (GPPGTGKT) serves as a coordination point for ATP. 2 positions are modified to phosphoserine: Ser577 and Ser582. Coiled-coil stretches lie at residues 801 to 825 (LTAEEVKRLEEQEEDTFRELRIFLR) and 917 to 943 (YAIIKEELDEDFEQLCEEIQESRKKRG). In terms of domain architecture, Bromo spans 811–923 (EQEEDTFREL…DTAYAIIKEE (113 aa)). Residue Lys959 forms a Glycyl lysine isopeptide (Lys-Gly) (interchain with G-Cter in SUMO2) linkage. The tract at residues 961-985 (NSTLVGDKRSDPEQNEKLKTPSTPV) is disordered. The span at 966–979 (GDKRSDPEQNEKLK) shows a compositional bias: basic and acidic residues. Ser970 carries the phosphoserine modification. Residue Lys979 forms a Glycyl lysine isopeptide (Lys-Gly) (interchain with G-Cter in SUMO2) linkage. 2 positions are modified to phosphothreonine: Thr980 and Thr983. A Phosphoserine modification is found at Ser1003. Thr1024 is modified (phosphothreonine).

The protein belongs to the AAA ATPase family. Interaction with ESR1 and NCOA3 is enhanced by estradiol. Interacts with acetylated lysine residues on histone H1.4, H2A, H2B and H3 (in vitro).

The protein resides in the nucleus. It catalyses the reaction ATP + H2O = ADP + phosphate + H(+). May be a transcriptional coactivator of the nuclear receptor ESR1 required to induce the expression of a subset of estradiol target genes, such as CCND1, MYC and E2F1. May play a role in the recruitment or occupancy of CREBBP at some ESR1 target gene promoters. May be required for histone hyperacetylation. The sequence is that of ATPase family AAA domain-containing protein 2 (ATAD2) from Pongo abelii (Sumatran orangutan).